Here is a 326-residue protein sequence, read N- to C-terminus: DnaJ homolog subfamily B member 6 (326 aa).

The J domain maps to 2-69 (VDYYEVLGVQ…KKRDIYDKYG (68 aa)). Residues 2 to 146 (VDYYEVLGVQ…TGSFFSAFSG (145 aa)) form an interaction with HSP70 region. The interaction with KRT18 stretch occupies residues 119-242 (FEDFFGNRRG…ADDDALAEER (124 aa)). Arg-135 is modified (omega-N-methylarginine). Residues 249–326 (ALPAQPAGLR…KKKKSTKGNH (78 aa)) are disordered. A Phosphoserine modification is found at Ser-277.

In terms of assembly, homooligomer. Interacts with BAG3, HSPB8 and STUB1. Interacts with ALKBH1. Interacts with HSP70, KRT18 and PTTG.

Its subcellular location is the cytoplasm. The protein resides in the perinuclear region. It is found in the nucleus. The protein localises to the myofibril. It localises to the sarcomere. Its subcellular location is the z line. Its function is as follows. Has a stimulatory effect on the ATPase activity of HSP70 in a dose-dependent and time-dependent manner and hence acts as a co-chaperone of HSP70. Plays an indispensable role in the organization of KRT8/KRT18 filaments. Acts as an endogenous molecular chaperone for neuronal proteins including huntingtin. Suppresses aggregation and toxicity of polyglutamine-containing, aggregation-prone proteins. Also reduces cellular toxicity and caspase-3 activity. This is DnaJ homolog subfamily B member 6 (DNAJB6) from Pongo abelii (Sumatran orangutan).